The chain runs to 499 residues: Glutamate--tRNA ligase (499 aa).

Residues 10 to 20 (PSPTGTPHVGM) carry the 'HIGH' region motif. Residues 255–259 (KLSKR) carry the 'KMSKS' region motif. K258 lines the ATP pocket.

It belongs to the class-I aminoacyl-tRNA synthetase family. Glutamate--tRNA ligase type 1 subfamily. In terms of assembly, monomer.

It is found in the cytoplasm. The enzyme catalyses tRNA(Glu) + L-glutamate + ATP = L-glutamyl-tRNA(Glu) + AMP + diphosphate. Functionally, catalyzes the attachment of glutamate to tRNA(Glu) in a two-step reaction: glutamate is first activated by ATP to form Glu-AMP and then transferred to the acceptor end of tRNA(Glu). In Corynebacterium urealyticum (strain ATCC 43042 / DSM 7109), this protein is Glutamate--tRNA ligase.